The sequence spans 242 residues: NH(3)-dependent NAD(+) synthetase (242 aa).

Residue 27-34 (GISGGIDS) participates in ATP binding. Asp-33 lines the Mg(2+) pocket. Arg-109 provides a ligand contact to deamido-NAD(+). Thr-129 is an ATP binding site. Glu-134 is a Mg(2+) binding site. Deamido-NAD(+)-binding residues include Lys-142 and Asp-149. Residues Lys-158 and Thr-180 each coordinate ATP. 231-232 (HK) serves as a coordination point for deamido-NAD(+).

The protein belongs to the NAD synthetase family. Homodimer.

It catalyses the reaction deamido-NAD(+) + NH4(+) + ATP = AMP + diphosphate + NAD(+) + H(+). The protein operates within cofactor biosynthesis; NAD(+) biosynthesis; NAD(+) from deamido-NAD(+) (ammonia route): step 1/1. In terms of biological role, catalyzes the ATP-dependent amidation of deamido-NAD to form NAD. Uses ammonia as a nitrogen source. In Thermoplasma volcanium (strain ATCC 51530 / DSM 4299 / JCM 9571 / NBRC 15438 / GSS1), this protein is NH(3)-dependent NAD(+) synthetase.